Reading from the N-terminus, the 189-residue chain is Parkinson disease protein 7 homolog (189 aa).

At alanine 2 the chain carries N-acetylalanine. Residues cysteine 46 and cysteine 53 are each lipidated (S-palmitoyl cysteine). Tyrosine 67 carries the phosphotyrosine modification. Cysteine 106 functions as the Nucleophile in the catalytic mechanism. Position 106 is a cysteine sulfinic acid (-SO2H); alternate (cysteine 106). Cysteine 106 carries the S-palmitoyl cysteine; alternate lipid modification. Histidine 126 is an active-site residue. A Glycyl lysine isopeptide (Lys-Gly) (interchain with G-Cter in SUMO) cross-link involves residue lysine 130. The residue at position 148 (lysine 148) is an N6-acetyllysine. Lysine 182 is modified (N6-succinyllysine).

Belongs to the peptidase C56 family. Homodimer. Binds EFCAB6/DJBP and PIAS2. Part of a ternary complex containing PARK7, EFCAB6/DJBP and AR. Binds to HIPK1. Interacts (via N-terminus) with OTUD7B. Interacts with BBS1, CLCF1 and MTERF. Interacts (via C-terminus) with NCF1; the interaction is enhanced by LPS and modulates NCF1 phosphorylation and membrane translocation. Interacts with NENF. Deglycase activity does not require glutathione as a cofactor, however, glycated glutathione constitutes a PARK7 substrate. is required as a cofactor. In terms of processing, sumoylated on Lys-130 by PIAS2 or PIAS4; which is essential for cell-growth promoting activity and transforming activity. Undergoes cleavage of a C-terminal peptide and subsequent activation of protease activity in response to oxidative stress. Expressed in erythroblasts and in mature red blood cells from peripheral blood (at protein level). In pancreas, expression is higher in islets than surrounding exocrine tissues.

The protein localises to the cell membrane. It is found in the cytoplasm. The protein resides in the membrane raft. It localises to the nucleus. Its subcellular location is the mitochondrion. The protein localises to the endoplasmic reticulum. The enzyme catalyses N(omega)-(1-hydroxy-2-oxopropyl)-L-arginyl-[protein] + H2O = lactate + L-arginyl-[protein] + H(+). The catalysed reaction is N(6)-(1-hydroxy-2-oxopropyl)-L-lysyl-[protein] + H2O = lactate + L-lysyl-[protein] + H(+). It catalyses the reaction S-(1-hydroxy-2-oxopropyl)-L-cysteinyl-[protein] + H2O = lactate + L-cysteinyl-[protein] + H(+). It carries out the reaction N(omega)-(1-hydroxy-2-oxoethyl)-L-arginyl-[protein] + H2O = L-arginyl-[protein] + glycolate + H(+). The enzyme catalyses N(6)-(1-hydroxy-2-oxoethyl)-L-lysyl-[protein] + H2O = glycolate + L-lysyl-[protein] + H(+). The catalysed reaction is S-(1-hydroxy-2-oxoethyl)-L-cysteinyl-[protein] + H2O = glycolate + L-cysteinyl-[protein] + H(+). It catalyses the reaction N(2)-(1-hydroxy-2-oxopropyl)-dGTP + H2O = lactate + dGTP + H(+). It carries out the reaction N(2)-(1-hydroxy-2-oxopropyl)-GTP + H2O = lactate + GTP + H(+). The enzyme catalyses N(2)-(1-hydroxy-2-oxopropyl)-GDP + H2O = lactate + GDP + H(+). The catalysed reaction is N(2)-(1-hydroxy-2-oxopropyl)-GMP + H2O = lactate + GMP + H(+). It catalyses the reaction N(2)-(1-hydroxy-2-oxoethyl)-dGTP + H2O = dGTP + glycolate + H(+). It carries out the reaction N(2)-(1-hydroxy-2-oxoethyl)-GTP + H2O = glycolate + GTP + H(+). The enzyme catalyses N(2)-(1-hydroxy-2-oxoethyl)-GDP + H2O = glycolate + GDP + H(+). The catalysed reaction is N(2)-(1-hydroxy-2-oxoethyl)-GMP + H2O = glycolate + GMP + H(+). It catalyses the reaction an N(2)-(1-hydroxy-2-oxopropyl)-guanosine in RNA + H2O = a guanosine in RNA + lactate + H(+). It carries out the reaction an N(2)-(1-hydroxy-2-oxopropyl)-2'-deoxyguanosine in DNA + H2O = a 2'-deoxyguanosine in DNA + lactate + H(+). The enzyme catalyses an N(2)-(1-hydroxy-2-oxoethyl)-guanosine in RNA + H2O = a guanosine in RNA + glycolate + H(+). The catalysed reaction is an N(2)-(1-hydroxy-2-oxoethyl)-2'-deoxyguanosine in DNA + H2O = a 2'-deoxyguanosine in DNA + glycolate + H(+). Multifunctional protein with controversial molecular function which plays an important role in cell protection against oxidative stress and cell death acting as oxidative stress sensor and redox-sensitive chaperone and protease. It is involved in neuroprotective mechanisms like the stabilization of NFE2L2 and PINK1 proteins, male fertility as a positive regulator of androgen signaling pathway as well as cell growth and transformation through, for instance, the modulation of NF-kappa-B signaling pathway. Has been described as a protein and nucleotide deglycase that catalyzes the deglycation of the Maillard adducts formed between amino groups of proteins or nucleotides and reactive carbonyl groups of glyoxals. But this function is rebuted by other works. As a protein deglycase, repairs methylglyoxal- and glyoxal-glycated proteins, and releases repaired proteins and lactate or glycolate, respectively. Deglycates cysteine, arginine and lysine residues in proteins, and thus reactivates these proteins by reversing glycation by glyoxals. Acts on early glycation intermediates (hemithioacetals and aminocarbinols), preventing the formation of advanced glycation endproducts (AGE) that cause irreversible damage. Also functions as a nucleotide deglycase able to repair glycated guanine in the free nucleotide pool (GTP, GDP, GMP, dGTP) and in DNA and RNA. Is thus involved in a major nucleotide repair system named guanine glycation repair (GG repair), dedicated to reversing methylglyoxal and glyoxal damage via nucleotide sanitization and direct nucleic acid repair. Protects histones from adduction by methylglyoxal, controls the levels of methylglyoxal-derived argininine modifications on chromatin. Able to remove the glycations and restore histone 3, histone glycation disrupts both local and global chromatin architecture by altering histone-DNA interactions as well as histone acetylation and ubiquitination levels. Displays a very low glyoxalase activity that may reflect its deglycase activity. Eliminates hydrogen peroxide and protects cells against hydrogen peroxide-induced cell death. Required for correct mitochondrial morphology and function as well as for autophagy of dysfunctional mitochondria. Plays a role in regulating expression or stability of the mitochondrial uncoupling proteins SLC25A14 and SLC25A27 in dopaminergic neurons of the substantia nigra pars compacta and attenuates the oxidative stress induced by calcium entry into the neurons via L-type channels during pacemaking. Regulates astrocyte inflammatory responses, may modulate lipid rafts-dependent endocytosis in astrocytes and neuronal cells. In pancreatic islets, involved in the maintenance of mitochondrial reactive oxygen species (ROS) levels and glucose homeostasis in an age- and diet dependent manner. Protects pancreatic beta cells from cell death induced by inflammatory and cytotoxic setting. Binds to a number of mRNAs containing multiple copies of GG or CC motifs and partially inhibits their translation but dissociates following oxidative stress. Metal-binding protein able to bind copper as well as toxic mercury ions, enhances the cell protection mechanism against induced metal toxicity. In macrophages, interacts with the NADPH oxidase subunit NCF1 to direct NADPH oxidase-dependent ROS production, and protects against sepsis. The polypeptide is Parkinson disease protein 7 homolog (Mus musculus (Mouse)).